The primary structure comprises 121 residues: Protein yippee-like 5 (121 aa).

In terms of domain architecture, Yippee spans 13–110 (RLFSCANCDA…LERALVRESE (98 aa)). Zn(2+)-binding residues include Cys17, Cys20, Cys73, and Cys76. The residue at position 118 (Ser118) is a Phosphoserine.

This sequence belongs to the yippee family. As to quaternary structure, identified in the CTLH complex that contains GID4, RANBP9 and/or RANBP10, MKLN1, MAEA, RMND5A (or alternatively its paralog RMND5B), GID8, ARMC8, WDR26 and YPEL5. Within this complex, MAEA, RMND5A (or alternatively its paralog RMND5B), GID8, WDR26, and RANBP9 and/or RANBP10 form the catalytic core, while GID4, MKLN1, ARMC8 and YPEL5 have ancillary roles. Interacts with RANBP9 and RANBP10.

It is found in the nucleus. Its subcellular location is the cytoplasm. It localises to the cytoskeleton. The protein localises to the microtubule organizing center. The protein resides in the centrosome. It is found in the spindle pole. Its subcellular location is the midbody. Its function is as follows. Component of the CTLH E3 ubiquitin-protein ligase complex that selectively accepts ubiquitin from UBE2H and mediates ubiquitination and subsequent proteasomal degradation of the transcription factor HBP1. Required for normal cell proliferation. The protein is Protein yippee-like 5 (YPEL5) of Macaca fascicularis (Crab-eating macaque).